A 330-amino-acid polypeptide reads, in one-letter code: Succinylglutamate desuccinylase (330 aa).

The Zn(2+) site is built by His53, Glu56, and His147. Residue Glu210 is part of the active site.

It belongs to the AspA/AstE family. Succinylglutamate desuccinylase subfamily. Zn(2+) serves as cofactor.

The enzyme catalyses N-succinyl-L-glutamate + H2O = L-glutamate + succinate. The protein operates within amino-acid degradation; L-arginine degradation via AST pathway; L-glutamate and succinate from L-arginine: step 5/5. Functionally, transforms N(2)-succinylglutamate into succinate and glutamate. The polypeptide is Succinylglutamate desuccinylase (Yersinia enterocolitica serotype O:8 / biotype 1B (strain NCTC 13174 / 8081)).